The sequence spans 441 residues: DNA-binding protein (441 aa).

The span at 1 to 18 (MERTPKRAHGFRSTKPVK) shows a compositional bias: basic residues. Residues 1-85 (MERTPKRAHG…EESPEAPLSD (85 aa)) form a disordered region. Composition is skewed to acidic residues over residues 24–33 (MMEEEEEEVE) and 67–79 (VDDE…EESP). Residues C191 and H193 each coordinate Zn(2+). The segment at 204–236 (VELNPSSEAGKRALAEQNGVIEKNRFGRQVVVL) is flexible loop. Zn(2+)-binding residues include C244, C262, C305, C307, C359, and C380. The segment at 426–441 (EVLAPVSPIASDDPFA) is C-terminal arm, DBP binding.

The protein belongs to the adenoviridae E2A DNA-binding protein family. In terms of assembly, homomultimerizes on viral ssDNA bound to pTP. Forms a initiation complex with viral polymerase, pTP and hosts NFIA and POU2F1/OCT1. Interacts with host SRCAP.

It localises to the host nucleus. In terms of biological role, plays a role in the elongation phase of viral strand displacement replication by unwinding the template in an ATP-independent fashion, employing its capacity to form multimers. Also enhances the rate of initiation. Released from template upon second strand synthesis. Assembles in complex with viral pTP, viral pol, host NFIA and host POU2F1/OCT1 on viral origin of replication. Covers the whole ssDNA genome during synthesis. The complementary strand synthesis induces its relese from DNA template. May inhibit cellular transcription mediated by the interaction between host SRCAP and CBP. The protein is DNA-binding protein of Fowl adenovirus A serotype 1 (strain CELO / Phelps) (FAdV-1).